A 349-amino-acid polypeptide reads, in one-letter code: Transcription initiation factor TFIID subunit 7 (349 aa).

The [KR]-[STA]-K motif motif lies at 3–5 (KSK). Residues 105-126 (PPVEEPVASTDPKASKKKDKDK) form a disordered region. Residues Ser-171, Ser-200, Ser-201, and Ser-213 each carry the phosphoserine modification. Residues 186–212 (EDETKEAENQGLDISSPGMSGHRQGHD) form a disordered region. The interval 227–247 (SSSSEDEDETQHQDEEDINII) is disordered. Residues 230–247 (SEDEDETQHQDEEDINII) are compositionally biased toward acidic residues. Residues 244–349 (INIIDTEEDL…QEELESLLEK (106 aa)) adopt a coiled-coil conformation. Ser-264 carries the post-translational modification Phosphoserine. The interval 328-349 (KEDREKEQLSSLQEELESLLEK) is disordered.

Belongs to the TAF7 family. In terms of assembly, component of the TFIID basal transcription factor complex, composed of TATA-box-binding protein TBP, and a number of TBP-associated factors (TAFs), including TAF1, TAF2, TAF3, TAF4, TAF5, TAF6, TAF7, TAF8, TAF9, TAF10, TAF11, TAF12 and TAF13. Part of a TFIID-containing RNA polymerase II pre-initiation complex that is composed of TBP and at least GTF2A1, GTF2A2, GTF2E1, GTF2E2, GTF2F1, GTF2H2, GTF2H3, GTF2H4, GTF2H5, GTF2B, TCEA1, ERCC2, ERCC3, TAF1, TAF2, TAF3, TAF4, TAF5, TAF6, TAF7, TAF8, TAF9, TAF10, TAF11, TAF12 and TAF13. Interacts with TAF1; the interaction is direct. Interacts with TAF1, TAF5, TAF11, TAF12, and TAF13, but not with TAF10 or TBP. Component of some MLL1/MLL complex, at least composed of the core components KMT2A/MLL1, ASH2L, HCFC1/HCF1, WDR5 and RBBP5, as well as the facultative components BACC1, CHD8, E2F6, HSP70, INO80C, KANSL1, LAS1L, MAX, MCRS1, MGA, MYST1/MOF, PELP1, PHF20, PRP31, RING2, RUVB1/TIP49A, RUVB2/TIP49B, SENP3, TAF1, TAF4, TAF6, TAF7, TAF9 and TEX10. Interacts with CIITA and TAF1 and inhibits their acetyltransferase activity, and behaving as a repressor of CIITA- and TAF1-regulated promoters. Post-translationally, phosphorylated by CIITA. Phosphorylation at Ser-264 by TAF1 in early G1 phase disrupts binding to TAF1. In terms of processing, ubiquitinated by TRIM26; leading to proteasomal degradation. In terms of tissue distribution, ubiquitous.

The protein localises to the nucleus. The TFIID basal transcription factor complex plays a major role in the initiation of RNA polymerase II (Pol II)-dependent transcription. TFIID recognizes and binds promoters with or without a TATA box via its subunit TBP, a TATA-box-binding protein, and promotes assembly of the pre-initiation complex (PIC). The TFIID complex consists of TBP and TBP-associated factors (TAFs), including TAF1, TAF2, TAF3, TAF4, TAF5, TAF6, TAF7, TAF8, TAF9, TAF10, TAF11, TAF12 and TAF13. TAF7 forms a promoter DNA binding subcomplex of TFIID, together with TAF1 and TAF2. Part of a TFIID complex containing TAF10 (TFIID alpha) and a TFIID complex lacking TAF10 (TFIID beta). In Homo sapiens (Human), this protein is Transcription initiation factor TFIID subunit 7 (TAF7).